Here is a 1147-residue protein sequence, read N- to C-terminus: Myosin light chain kinase, smooth muscle (1147 aa).

The interval 1-41 is actin-binding; that stretch reads MDFRANLQRQVKPKTVSEEERKVHSPQQVDFRSVLAKKGTP. The segment at 1-330 is disordered; sequence MDFRANLQRQ…PPASPGTAPT (330 aa). Residues 26–41 are calmodulin-binding; the sequence is PQQVDFRSVLAKKGTP. Residues 43–55 show a composition bias toward pro residues; sequence TPVPEKAPPPKPA. Tandem repeats lie at residues 100–111 and 112–123. The segment at 100-288 is 16 X 12 AA tandem repeats; it reads SLKPVANAKP…KAVANAKPAE (189 aa). The 3; truncated repeat unit spans residues 124–132; sequence TLKPVANAE. 13 tandem repeats follow at residues 133–144, 145–156, 157–168, 169–180, 181–192, 193–204, 205–216, 217–228, 229–240, 241–252, 253–264, 265–276, and 277–288. The actin-binding (calcium/calmodulin-insensitive) stretch occupies residues 292 to 692; it reads PAGKEELKKE…TVTVNTEQKV (401 aa). A compositionally biased stretch (basic and acidic residues) spans 293–320; that stretch reads AGKEELKKEVQNDVNCKREKAGAADNEK. Ig-like C2-type domains are found at residues 329 to 417 and 469 to 557; these read PTFK…CHVT and PQIP…VNLT. Cysteine 350 and cysteine 401 form a disulfide bridge. Disordered stretches follow at residues 424 to 476 and 644 to 678; these read SENA…QFPE and SEPS…KEPE. A compositionally biased stretch (pro residues) spans 459–472; that stretch reads PKTPPKAATPPQIP. In terms of domain architecture, Fibronectin type-III spans 565-657; it reads PAGTPCASDI…QESELTTVGE (93 aa). Residues 644–653 are compositionally biased toward polar residues; sequence SEPSQESELT. Positions 662–677 are enriched in acidic residues; that stretch reads PKDEVEEVSDDDEKEP. Position 670 is a phosphoserine (serine 670). A Phosphotyrosine; by ABL1 modification is found at tyrosine 681. Positions 696-951 constitute a Protein kinase domain; sequence YDIEERLGSG…CTQCLQHPWL (256 aa). Residues 702 to 710 and lysine 725 contribute to the ATP site; that span reads LGSGKFGQV. Tyrosine 807 bears the Phosphotyrosine; by ABL1 mark. The active-site Proton acceptor is the aspartate 817. At tyrosine 867 the chain carries Phosphotyrosine; by ABL1. The calmodulin-binding stretch occupies residues 943–1006; that stretch reads TQCLQHPWLM…SGLSGRKSST (64 aa). 5 positions are modified to phosphoserine: serine 991, serine 992, serine 1004, serine 1005, and serine 1008. A disordered region spans residues 999-1019; the sequence is LSGRKSSTGSPTSPLTAERLE. Residues 1002–1013 are compositionally biased toward polar residues; that stretch reads RKSSTGSPTSPL. At threonine 1010 the chain carries Phosphothreonine. Serine 1011 is modified (phosphoserine). One can recognise an Ig-like C2-type 3 domain in the interval 1041–1130; it reads PYFSKTIRDL…GEATCTAELI (90 aa). Cysteine 1062 and cysteine 1114 are oxidised to a cystine.

It belongs to the protein kinase superfamily. CAMK Ser/Thr protein kinase family. All isoforms including Telokin bind calmodulin. Interacts with SVIL. Interacts with CTTN; this interaction is reduced during thrombin-induced endothelial cell (EC) contraction but is promoted by the barrier-protective agonist sphingosine 1-phosphate (S1P) within lamellipodia. A complex made of ABL1, CTTN and MYLK regulates cortical actin-based cytoskeletal rearrangement critical to sphingosine 1-phosphate (S1P)-mediated endothelial cell (EC) barrier enhancement. Binds to NAA10/ARD1 and PTK2B/PYK2. The cofactor is Mg(2+). Ca(2+) is required as a cofactor. The C-terminus is deglutamylated by AGTPBP1/CCP1, AGBL1/CCP4 and AGBL4/CCP6, leading to the formation of Myosin light chain kinase, smooth muscle, deglutamylated form. The consequences of C-terminal deglutamylation are unknown. Post-translationally, can probably be down-regulated by phosphorylation. Tyrosine phosphorylation by ABL1 increases kinase activity, reverses MLCK-mediated inhibition of Arp2/3-mediated actin polymerization, and enhances CTTN-binding. Phosphorylation by SRC promotes CTTN binding. Isoform Telokin is found in all smooth muscle tested except the aorta. It is not present in non-muscle tissue.

Its subcellular location is the cytoplasm. The protein resides in the cell projection. The protein localises to the lamellipodium. It localises to the cleavage furrow. It is found in the cytoskeleton. Its subcellular location is the stress fiber. The enzyme catalyses L-seryl-[myosin light chain] + ATP = O-phospho-L-seryl-[myosin light chain] + ADP + H(+). It catalyses the reaction L-threonyl-[myosin light chain] + ATP = O-phospho-L-threonyl-[myosin light chain] + ADP + H(+). With respect to regulation, all catalytically active isoforms require binding to calcium and calmodulin for activation. Calcium/calmodulin-dependent myosin light chain kinase implicated in smooth muscle contraction via phosphorylation of myosin light chains (MLC). Also regulates actin-myosin interaction through a non-kinase activity. Phosphorylates PTK2B/PYK2 and myosin light-chains. Involved in the inflammatory response (e.g. apoptosis, vascular permeability, leukocyte diapedesis), cell motility and morphology, airway hyperreactivity and other activities relevant to asthma. Required for tonic airway smooth muscle contraction that is necessary for physiological and asthmatic airway resistance. Necessary for gastrointestinal motility. Implicated in the regulation of endothelial as well as vascular permeability, probably via the regulation of cytoskeletal rearrangements. In the nervous system it has been shown to control the growth initiation of astrocytic processes in culture and to participate in transmitter release at synapses formed between cultured sympathetic ganglion cells. Critical participant in signaling sequences that result in fibroblast apoptosis. Plays a role in the regulation of epithelial cell survival. Required for epithelial wound healing, especially during actomyosin ring contraction during purse-string wound closure. Mediates RhoA-dependent membrane blebbing. Triggers TRPC5 channel activity in a calcium-dependent signaling, by inducing its subcellular localization at the plasma membrane. Promotes cell migration (including tumor cells) and tumor metastasis. PTK2B/PYK2 activation by phosphorylation mediates ITGB2 activation and is thus essential to trigger neutrophil transmigration during acute lung injury (ALI). May regulate optic nerve head astrocyte migration. Probably involved in mitotic cytoskeletal regulation. Regulates tight junction probably by modulating ZO-1 exchange in the perijunctional actomyosin ring. Mediates burn-induced microvascular barrier injury; triggers endothelial contraction in the development of microvascular hyperpermeability by phosphorylating MLC. Essential for intestinal barrier dysfunction. Mediates Giardia spp.-mediated reduced epithelial barrier function during giardiasis intestinal infection via reorganization of cytoskeletal F-actin and tight junctional ZO-1. Necessary for hypotonicity-induced Ca(2+) entry and subsequent activation of volume-sensitive organic osmolyte/anion channels (VSOAC) in cervical cancer cells. The protein is Myosin light chain kinase, smooth muscle (MYLK) of Oryctolagus cuniculus (Rabbit).